A 157-amino-acid polypeptide reads, in one-letter code: Trafficking protein particle complex subunit 6b (157 aa).

It belongs to the TRAPP small subunits family. BET3 subfamily. As to quaternary structure, homodimer. Part of a TRAPP complex.

It is found in the golgi apparatus. The protein resides in the cis-Golgi network. Its subcellular location is the endoplasmic reticulum. Component of a transport protein particle (TRAPP) complex that may function in specific stages of inter-organelle traffic. Specifically involved in the early development of neural circuitry, likely by controlling the frequency and amplitude of intracellular calcium transients implicated in the regulation of neuron differentiation and survival. This is Trafficking protein particle complex subunit 6b from Danio rerio (Zebrafish).